Consider the following 456-residue polypeptide: tRNA-2-methylthio-N(6)-dimethylallyladenosine synthase (456 aa).

One can recognise an MTTase N-terminal domain in the interval arginine 13–arginine 129. [4Fe-4S] cluster contacts are provided by cysteine 22, cysteine 58, cysteine 92, cysteine 168, cysteine 172, and cysteine 175. The region spanning glycine 154–glutamine 384 is the Radical SAM core domain. Positions leucine 387–serine 450 constitute a TRAM domain.

It belongs to the methylthiotransferase family. MiaB subfamily. Monomer. [4Fe-4S] cluster serves as cofactor.

It localises to the cytoplasm. The catalysed reaction is N(6)-dimethylallyladenosine(37) in tRNA + (sulfur carrier)-SH + AH2 + 2 S-adenosyl-L-methionine = 2-methylsulfanyl-N(6)-dimethylallyladenosine(37) in tRNA + (sulfur carrier)-H + 5'-deoxyadenosine + L-methionine + A + S-adenosyl-L-homocysteine + 2 H(+). In terms of biological role, catalyzes the methylthiolation of N6-(dimethylallyl)adenosine (i(6)A), leading to the formation of 2-methylthio-N6-(dimethylallyl)adenosine (ms(2)i(6)A) at position 37 in tRNAs that read codons beginning with uridine. This Syntrophobacter fumaroxidans (strain DSM 10017 / MPOB) protein is tRNA-2-methylthio-N(6)-dimethylallyladenosine synthase.